The primary structure comprises 94 residues: Co-chaperonin GroES (94 aa).

As to quaternary structure, heptamer of 7 subunits arranged in a ring. Interacts with the chaperonin GroEL.

The protein localises to the cytoplasm. Functionally, together with the chaperonin GroEL, plays an essential role in assisting protein folding. The GroEL-GroES system forms a nano-cage that allows encapsulation of the non-native substrate proteins and provides a physical environment optimized to promote and accelerate protein folding. GroES binds to the apical surface of the GroEL ring, thereby capping the opening of the GroEL channel. The chain is Co-chaperonin GroES from Thermoanaerobacter brockii (Thermoanaerobium brockii).